The following is a 275-amino-acid chain: MKIELAKKYGFCFGVKRAIKIAENTENSATIGELIHNNEEIDRLHKKFGVKTLNDISEITDEKRLIIRTHGITKDDLDVLKSKNKELIDATCPFVKKPQQIVEKMSSEGYDIVIFGDKNHPEVKGVKSYAKGKVFVVLDVSELKNLKISNKVALVSQTTKRIENFTKIAEFLMTTTKELRIFNTICNATFQNQEAAAKLAKKADVMIIIGGKNSSNTKQLLLISQNFCKNSYLIENENELKKEWFLNKEICGITAGASTPEWIIKKVVKKINTMC.

A [4Fe-4S] cluster-binding site is contributed by Cys12. Positions 36 and 70 each coordinate (2E)-4-hydroxy-3-methylbut-2-enyl diphosphate. 2 residues coordinate dimethylallyl diphosphate: His36 and His70. His36 and His70 together coordinate isopentenyl diphosphate. Cys92 serves as a coordination point for [4Fe-4S] cluster. His120 is a (2E)-4-hydroxy-3-methylbut-2-enyl diphosphate binding site. Position 120 (His120) interacts with dimethylallyl diphosphate. Position 120 (His120) interacts with isopentenyl diphosphate. Glu122 (proton donor) is an active-site residue. Thr158 lines the (2E)-4-hydroxy-3-methylbut-2-enyl diphosphate pocket. Cys186 provides a ligand contact to [4Fe-4S] cluster. (2E)-4-hydroxy-3-methylbut-2-enyl diphosphate is bound by residues Ser214, Ser215, Asn216, and Ser258. Dimethylallyl diphosphate contacts are provided by Ser214, Ser215, Asn216, and Ser258. Isopentenyl diphosphate is bound by residues Ser214, Ser215, Asn216, and Ser258.

This sequence belongs to the IspH family. It depends on [4Fe-4S] cluster as a cofactor.

It catalyses the reaction isopentenyl diphosphate + 2 oxidized [2Fe-2S]-[ferredoxin] + H2O = (2E)-4-hydroxy-3-methylbut-2-enyl diphosphate + 2 reduced [2Fe-2S]-[ferredoxin] + 2 H(+). The enzyme catalyses dimethylallyl diphosphate + 2 oxidized [2Fe-2S]-[ferredoxin] + H2O = (2E)-4-hydroxy-3-methylbut-2-enyl diphosphate + 2 reduced [2Fe-2S]-[ferredoxin] + 2 H(+). It functions in the pathway isoprenoid biosynthesis; dimethylallyl diphosphate biosynthesis; dimethylallyl diphosphate from (2E)-4-hydroxy-3-methylbutenyl diphosphate: step 1/1. The protein operates within isoprenoid biosynthesis; isopentenyl diphosphate biosynthesis via DXP pathway; isopentenyl diphosphate from 1-deoxy-D-xylulose 5-phosphate: step 6/6. Its function is as follows. Catalyzes the conversion of 1-hydroxy-2-methyl-2-(E)-butenyl 4-diphosphate (HMBPP) into a mixture of isopentenyl diphosphate (IPP) and dimethylallyl diphosphate (DMAPP). Acts in the terminal step of the DOXP/MEP pathway for isoprenoid precursor biosynthesis. This is 4-hydroxy-3-methylbut-2-enyl diphosphate reductase from Campylobacter hominis (strain ATCC BAA-381 / DSM 21671 / CCUG 45161 / LMG 19568 / NCTC 13146 / CH001A).